We begin with the raw amino-acid sequence, 32 residues long: Ranatuerin-2Lb (32 aa).

Residues C27 and C32 are joined by a disulfide bond.

In terms of tissue distribution, expressed by the skin glands.

The protein localises to the secreted. Functionally, antibacterial activity against Gram-positive bacterium S.aureus and Gram-negative bacterium E.coli. Has activity against C.albicans. This chain is Ranatuerin-2Lb, found in Rana luteiventris (Columbia spotted frog).